The chain runs to 336 residues: RHOMBOID-like protein 12, mitochondrial (336 aa).

Residues 1–85 (MKAIFNRRVV…RGFFASALGN (85 aa)) constitute a mitochondrion transit peptide. The next 6 helical transmembrane spans lie at 135 to 155 (VVLG…VFNQ), 185 to 205 (IDIG…TSIA), 216 to 236 (LYLA…AYMA), 254 to 274 (PGLG…FLHP), 276 to 296 (ATLY…IFLI), and 307 to 327 (NSNI…IAWA). The active-site Nucleophile is the Ser259. His315 acts as the Charge relay system in catalysis.

It belongs to the peptidase S54 family.

Its subcellular location is the mitochondrion membrane. Probable rhomboid-type serine protease that catalyzes intramembrane proteolysis. Unable to cleave either of the yeast Pcp1 substrates in yeast cells. The polypeptide is RHOMBOID-like protein 12, mitochondrial (Arabidopsis thaliana (Mouse-ear cress)).